The chain runs to 192 residues: 7-methyl-GTP pyrophosphatase (192 aa).

The Proton acceptor role is filled by aspartate 69.

Belongs to the Maf family. YceF subfamily. It depends on a divalent metal cation as a cofactor.

It localises to the cytoplasm. It carries out the reaction N(7)-methyl-GTP + H2O = N(7)-methyl-GMP + diphosphate + H(+). Its function is as follows. Nucleoside triphosphate pyrophosphatase that hydrolyzes 7-methyl-GTP (m(7)GTP). May have a dual role in cell division arrest and in preventing the incorporation of modified nucleotides into cellular nucleic acids. In Pseudomonas fluorescens (strain Pf0-1), this protein is 7-methyl-GTP pyrophosphatase.